The chain runs to 166 residues: Ribosome-binding factor A (166 aa).

Positions 119–166 are disordered; sequence VQAQAKSGVYAGDEDPYVKPRVIGEDEDEDDEDGDDIDRSAPGYEPAH. Residues 143–154 show a composition bias toward acidic residues; it reads EDEDEDDEDGDD.

This sequence belongs to the RbfA family. In terms of assembly, monomer. Binds 30S ribosomal subunits, but not 50S ribosomal subunits or 70S ribosomes.

Its subcellular location is the cytoplasm. Functionally, one of several proteins that assist in the late maturation steps of the functional core of the 30S ribosomal subunit. Associates with free 30S ribosomal subunits (but not with 30S subunits that are part of 70S ribosomes or polysomes). Required for efficient processing of 16S rRNA. May interact with the 5'-terminal helix region of 16S rRNA. The polypeptide is Ribosome-binding factor A (Clavibacter michiganensis subsp. michiganensis (strain NCPPB 382)).